A 582-amino-acid chain; its full sequence is External alternative NAD(P)H-ubiquinone oxidoreductase B4, mitochondrial (582 aa).

The transit peptide at 1 to 39 (MSFHSFYQRASSLFKAYPSTSKILLLSTFSGGGGVLVYS) directs the protein to the mitochondrion. Residue 65–95 (KVVVLGSGWSGYSFLSYLNNPNYDVQVVSPR) coordinates FAD. 227–263 (LHFVVVGGGPTGVEFSAELHDFLVQDVAKIYPKVQEF) lines the NAD(+) pocket. One can recognise an EF-hand domain in the interval 384–419 (RVMEDIAAIFNKADKGNTGTLKKKDFNSVVKDICQR). Ca(2+) contacts are provided by Asp397, Thr401, Thr403, and Asp408. The Microbody targeting signal motif lies at 573–582 (FVFGRDSSSI).

It belongs to the NADH dehydrogenase family. Requires FAD as cofactor. Expressed in seedlings, roots, cotyledons, stems, buds and flowers and, to a lower extent, in stems and leaves.

It localises to the mitochondrion inner membrane. It is found in the peroxisome. It catalyses the reaction a quinone + NADH + H(+) = a quinol + NAD(+). The enzyme catalyses a ubiquinone + NADH + H(+) = a ubiquinol + NAD(+). With respect to regulation, no effect of calcium ions on activity. Functionally, alternative NADH-ubiquinone oxidoreductase which catalyzes the oxidation of mitochondrial NADH does not translocate protons across the inner mitochondrial membrane. NAD(P)H dehydrogenase; more efficient on NADH. This is External alternative NAD(P)H-ubiquinone oxidoreductase B4, mitochondrial (NDB4) from Arabidopsis thaliana (Mouse-ear cress).